Reading from the N-terminus, the 591-residue chain is Paxillin (591 aa).

N-acetylmethionine is present on M1. D2 carries the N-acetylserine modification. The short motif at 3-15 (DLDALLADLESTT) is the LD motif 1 element. The tract at residues 17 to 138 (HISKRPVFLS…PSPTVMSTSL (122 aa)) is disordered. Position 31 is a phosphotyrosine; by PTK6 (Y31). The span at 45-54 (VPPPVPPPPS) shows a compositional bias: pro residues. Over residues 69-106 (WQPSSSRFIHQQPQSSSPVYGSSAKTSSVSNPQDSVGS) the composition is skewed to polar residues. Phosphoserine is present on residues S83 and S85. Y88 is modified (phosphotyrosine). S106 is modified (phosphoserine). At Y118 the chain carries Phosphotyrosine; by PTK6. Phosphoserine occurs at positions 119, 126, and 130. The segment covering 121 to 137 (PNKQKSAEPSPTVMSTS) has biased composition (polar residues). Phosphothreonine is present on T132. A phosphoserine mark is found at S137, S140, and S143. The LD motif 2 signature appears at 144–156 (ELDRLLLELNAVQ). The disordered stretch occupies residues 159–260 (PPGFPADEAN…TQQQTRISAS (102 aa)). Phosphotyrosine is present on Y181. Positions 216-228 (SVESLLDELESSV) match the LD motif 3 motif. S230 is modified (phosphoserine). Residues 236-260 (TVNQGEMSSPQRVTSTQQQTRISAS) are compositionally biased toward polar residues. At S244 the chain carries Phosphoserine; by CDK5. The residue at position 250 (S250) is a Phosphoserine; by SLK. S258, S261, S272, S303, S322, S332, and S340 each carry phosphoserine. The segment at 262-315 (ATRELDELMASLSDFKIQGLEQRADGERCWAAGWPRDGGRSSPGGQDEGGFMAQ) is required for binding to PARVA and ILK. Positions 265–276 (ELDELMASLSDF) match the LD motif 4 motif. The segment at 291-335 (WAAGWPRDGGRSSPGGQDEGGFMAQGKTGSSSPPGGPPKPGSQLD) is disordered. The LD motif 5 signature appears at 333-345 (QLDSMLGSLQSDL). LIM zinc-binding domains lie at 356–415 (GVCG…LFSP), 416–473 (RCYY…DMFA), 474–533 (PKCG…RRGS), and 534–591 (LCSG…KLFC). Phosphoserine is present on S533.

This sequence belongs to the paxillin family. As to quaternary structure, interacts in vitro with VCL/vinculin as well as to the SH3 domain of SRC and, when tyrosine phosphorylated, to the SH2 domain of CRK. Interacts with GIT1. Interacts with NUDT16L1/SDOS. Interacts with PTK2/FAK1. Interacts with PTK2B/PYK2. Interacts with ASAP2. Interacts with unphosphorylated ITGA4. Interacts with RNF5. Interacts with PDCD10. Interacts with NEK3, the interaction is prolactin-dependent. Interacts with PTK6. Interacts with TGFB1I1. Interacts with SORBS1. Interacts with PARVB. Interacts (via LD motif 4) with PARVA/PARVIN. Interacts (via LD motif 4) with ILK. Interacts (via cytoplasmic domain) with CEACAM1; the interaction is phosphotyrosyl-dependent. Interacts with LIMA1; this complex stabilizes actin dynamics. Interacts with CD36 (via C-terminus). Interacts with TRIM15. Interacts with PAK4; PAK4 acts as a scaffold to suppport PAXI phosphorylation at Ser-272. Interacts strongly with PTK2/FAK1 and weakly with VCL/vinculin. In terms of assembly, interacts strongly with VCL/vinculin but only weakly with PTK2/FAK1. Post-translationally, phosphorylated by MAPK1/ERK2. Phosphorylated on tyrosine residues during integrin-mediated cell adhesion, embryonic development, fibroblast transformation and following stimulation of cells by mitogens. Phosphorylation at Ser-244 by CDK5 reduces its interaction with PTK2/FAK1 in matrix-cell focal adhesions (MCFA) during oligodendrocytes (OLs) differentiation. Phosphorylation at Tyr-31 and Tyr-118 by PTK6 promote the activation of RAC1 via CRK/CrKII, thereby promoting migration and invasion. Phosphorylation at Ser-250 by SLK is required for PXN redistribution and cell motility. Phosphorylation at Ser-272 promotes focal adhesion disassembly during cell migration.

The protein localises to the cytoplasm. It localises to the cytoskeleton. The protein resides in the cell junction. Its subcellular location is the focal adhesion. It is found in the cell cortex. Functionally, cytoskeletal protein involved in actin-membrane attachment at sites of cell adhesion to the extracellular matrix (focal adhesion). Recruits other proteins such as TRIM15 to focal adhesion. This Homo sapiens (Human) protein is Paxillin.